We begin with the raw amino-acid sequence, 155 residues long: S-ribosylhomocysteine lyase (155 aa).

Fe cation is bound by residues His58, His62, and Cys125.

This sequence belongs to the LuxS family. Homodimer. Requires Fe cation as cofactor.

It carries out the reaction S-(5-deoxy-D-ribos-5-yl)-L-homocysteine = (S)-4,5-dihydroxypentane-2,3-dione + L-homocysteine. Its function is as follows. Involved in the synthesis of autoinducer 2 (AI-2) which is secreted by bacteria and is used to communicate both the cell density and the metabolic potential of the environment. The regulation of gene expression in response to changes in cell density is called quorum sensing. Catalyzes the transformation of S-ribosylhomocysteine (RHC) to homocysteine (HC) and 4,5-dihydroxy-2,3-pentadione (DPD). The polypeptide is S-ribosylhomocysteine lyase (Helicobacter pylori (strain Shi470)).